Reading from the N-terminus, the 363-residue chain is Cobalt-precorrin-5B C(1)-methyltransferase (363 aa).

It belongs to the CbiD family.

The catalysed reaction is Co-precorrin-5B + S-adenosyl-L-methionine = Co-precorrin-6A + S-adenosyl-L-homocysteine. Its pathway is cofactor biosynthesis; adenosylcobalamin biosynthesis; cob(II)yrinate a,c-diamide from sirohydrochlorin (anaerobic route): step 6/10. Its function is as follows. Catalyzes the methylation of C-1 in cobalt-precorrin-5B to form cobalt-precorrin-6A. This is Cobalt-precorrin-5B C(1)-methyltransferase from Treponema denticola (strain ATCC 35405 / DSM 14222 / CIP 103919 / JCM 8153 / KCTC 15104).